The chain runs to 552 residues: Probable protein kinase UbiB (552 aa).

Residues 22–42 traverse the membrane as a helical segment; the sequence is LLPANLPLAATLLLLPFKLFP. The region spanning 118-498 is the Protein kinase domain; that stretch reads SFNIEPLASA…QQLARQRNRR (381 aa). ATP is bound by residues 124 to 132 and Lys146; that span reads LASASVAQV. The Proton acceptor role is filled by Asp281. 2 consecutive transmembrane segments (helical) span residues 501–521 and 530–550; these read ITLL…GEGI and FGDI…AWLL.

The protein belongs to the ABC1 family. UbiB subfamily.

Its subcellular location is the cell inner membrane. It functions in the pathway cofactor biosynthesis; ubiquinone biosynthesis [regulation]. Its function is as follows. Is probably a protein kinase regulator of UbiI activity which is involved in aerobic coenzyme Q (ubiquinone) biosynthesis. In Cellvibrio japonicus (strain Ueda107) (Pseudomonas fluorescens subsp. cellulosa), this protein is Probable protein kinase UbiB.